A 492-amino-acid chain; its full sequence is Probable G-protein coupled receptor Mth-like 8 (492 aa).

An N-terminal signal peptide occupies residues 1-21 (MAQFCILGVLLILSGTHCSWG). Residues 22–218 (FHEETHYPCA…FVLGVREWTY (197 aa)) lie on the Extracellular side of the membrane. Disulfide bonds link Cys30-Cys82, Cys84-Cys89, Cys93-Cys184, and Cys94-Cys107. N-linked (GlcNAc...) asparagine glycans are attached at residues Asn37 and Asn51. N-linked (GlcNAc...) asparagine glycosylation is found at Asn129, Asn169, and Asn192. Residues 219-239 (AICLLIAILSMFIVLMVYLMC) form a helical membrane-spanning segment. Residues 240–245 (SEMRNS) lie on the Cytoplasmic side of the membrane. A helical transmembrane segment spans residues 246–266 (FYGVAIKAYAICMILGYALLA). The Extracellular portion of the chain corresponds to 267–282 (YLTLHNPANLSNAACR). N-linked (GlcNAc...) asparagine glycosylation is present at Asn275. A helical membrane pass occupies residues 283–303 (ILPSLALMNLVLSFYILSFIA). Residues 304–317 (FKLYLSFYGVVFTK) are Cytoplasmic-facing. A helical membrane pass occupies residues 318–338 (LMFWLIFTPIVLVAVGWSFFV). Topologically, residues 339–362 (GFSYYGSRLIFGGDTCWFDPRNWS) are extracellular. Asn360 carries N-linked (GlcNAc...) asparagine glycosylation. The chain crosses the membrane as a helical span at residues 363-383 (VMIYFYAPVFVACAISGFFYV). Topologically, residues 384–411 (LSQIYIRDQPDIETEKSFESIEKNRFKS) are cytoplasmic. The helical transmembrane segment at 412-432 (FWKYFGYTAVVWVVCICSFAF) threads the bilayer. The Extracellular segment spans residues 433–441 (NYYWENRSH). The N-linked (GlcNAc...) asparagine glycan is linked to Asn438. Residues 442–462 (LNYAVSFCMAFHGFAALYALI) traverse the membrane as a helical segment. Over 463–492 (GKNQQIQNFLRRIDNGEDTCENSVPLSSFG) the chain is Cytoplasmic.

Belongs to the G-protein coupled receptor 2 family. Mth subfamily.

It localises to the cell membrane. The protein is Probable G-protein coupled receptor Mth-like 8 (mthl8) of Drosophila melanogaster (Fruit fly).